The chain runs to 181 residues: Oligoribonuclease (181 aa).

One can recognise an Exonuclease domain in the interval 8–171; the sequence is LIWVDLEMTG…VDIQESIAEL (164 aa). Tyrosine 129 is a catalytic residue.

The protein belongs to the oligoribonuclease family.

The protein resides in the cytoplasm. Its function is as follows. 3'-to-5' exoribonuclease specific for small oligoribonucleotides. This is Oligoribonuclease from Shewanella loihica (strain ATCC BAA-1088 / PV-4).